The sequence spans 351 residues: S-adenosylmethionine:tRNA ribosyltransferase-isomerase (351 aa).

It belongs to the QueA family. As to quaternary structure, monomer.

It localises to the cytoplasm. It carries out the reaction 7-aminomethyl-7-carbaguanosine(34) in tRNA + S-adenosyl-L-methionine = epoxyqueuosine(34) in tRNA + adenine + L-methionine + 2 H(+). It functions in the pathway tRNA modification; tRNA-queuosine biosynthesis. Its function is as follows. Transfers and isomerizes the ribose moiety from AdoMet to the 7-aminomethyl group of 7-deazaguanine (preQ1-tRNA) to give epoxyqueuosine (oQ-tRNA). This chain is S-adenosylmethionine:tRNA ribosyltransferase-isomerase, found in Acinetobacter baumannii (strain SDF).